The following is a 223-amino-acid chain: UPF0441 protein YgiB (223 aa).

The span at 178–195 (TVPKTAMAPKPATTTTVT) shows a compositional bias: low complexity. The interval 178–223 (TVPKTAMAPKPATTTTVTRGGFGESVAKQSTMQRSATGTSSRSMGG) is disordered. The span at 204 to 223 (AKQSTMQRSATGTSSRSMGG) shows a compositional bias: polar residues.

This sequence belongs to the UPF0441 family.

The sequence is that of UPF0441 protein YgiB from Shigella dysenteriae serotype 1 (strain Sd197).